A 590-amino-acid chain; its full sequence is PWWP domain-containing protein 2B (590 aa).

Disordered regions lie at residues 52–110 (APLP…PPLP), 182–347 (KSTL…EHEP), 360–398 (YLRD…PQGP), and 426–467 (DSLD…TVPP). The residue at position 84 (Ser-84) is a Phosphoserine. The span at 99–110 (PEPPPPLVPPLP) shows a compositional bias: pro residues. A phosphoserine mark is found at Ser-186 and Ser-206. The span at 208 to 217 (PDRELRKPEE) shows a compositional bias: basic and acidic residues. Ser-250 is modified (phosphoserine). Basic and acidic residues predominate over residues 296 to 305 (VLDRESRDRP). Residues 376–385 (GLADLSSGSS) are compositionally biased toward low complexity. Ser-447 carries the post-translational modification Phosphoserine. In terms of domain architecture, PWWP spans 490–550 (VGDIVWGKIH…ISKLSPFSEF (61 aa)).

As to quaternary structure, component of a MTA1-specific subcomplex of the NuRD complex composed of PWWP2B, MTA1 and HDAC1 but does not contain CHD4 and MBD3. Interacts with MTA1 and HDAC1. Interacts with MTA2, MTA3, HDAC2, RBBP4, RBBP7, BRCC3 and ZNF516. Does not interact with CHD4 and MBD3. Deubiquitinated by BRCC3; leading to its stabilization.

In terms of biological role, chromatin-binding protein that acts as an adapter between distinct nucleosome components (H3K36me3 or H2A.Z) and chromatin-modifying complexes, contributing to the regulation of the levels of histone acetylation at actively transcribed genes. Competes with CHD4 and MBD3 for interaction with MTA1 to form a NuRD subcomplex, preventing the formation of full NuRD complex (containing CHD4 and MBD3), leading to recruitment of HDACs to gene promoters resulting in turn in the deacetylation of nearby H3K27 and H2A.Z. Plays a role in facilitating transcriptional elongation through regulation of histone acetylation. Negatively regulates brown adipocyte thermogenesis by interacting with and stabilizing HDAC1 at the UCP1 gene promoter, thereby promoting histone deacetylation at the promoter leading to the repression of UCP1 expression. This Homo sapiens (Human) protein is PWWP domain-containing protein 2B (PWWP2B).